Here is a 345-residue protein sequence, read N- to C-terminus: Beta-2-glycoprotein 1 (345 aa).

A signal peptide spans M1–A19. 4 consecutive Sushi domains span residues R21–P81, R82–P139, I140–E202, and V203–A262. Disulfide bonds link C23–C66, C51–C79, C84–C124, C110–C137, C142–C188, C174–C200, C205–C248, C234–C260, C264–C315, C300–C325, and C307–C345. A glycan (O-linked (GalNAc...) threonine) is linked at T33. T149 is a glycosylation site (O-linked (GalNAc...) threonine). N-linked (GlcNAc...) asparagine glycosylation is found at N162, N183, and N193. Residue N253 is glycosylated (N-linked (GlcNAc...) asparagine). Residues S263–C345 form a sushi-like region.

Expressed by the liver and secreted in plasma.

The protein resides in the secreted. Functionally, binds to various kinds of negatively charged substances such as heparin, phospholipids, and dextran sulfate. May prevent activation of the intrinsic blood coagulation cascade by binding to phospholipids on the surface of damaged cells. This is Beta-2-glycoprotein 1 (APOH) from Pan troglodytes (Chimpanzee).